We begin with the raw amino-acid sequence, 133 residues long: Mitochondrial import inner membrane translocase subunit TIM17-3 (133 aa).

Helical transmembrane passes span 15–35 (IVNAIGYAFGAGAVGGSVYHF), 63–83 (GGTFAVFGGLLSTFDYALVRI), 90–105 (WNSIVAGAATGGVLSI), and 115–128 (SAVMFGFFLAVLNP).

It belongs to the Tim17/Tim22/Tim23 family. Component of the TIM17:23 complex at least composed of TIM23, TIM17 and TIM50. The complex interacts with the TIM44 component of the PAM complex. In terms of tissue distribution, expressed in cotyledons, roots, flowers and leaves.

Its subcellular location is the mitochondrion inner membrane. Essential component of the TIM17:23 complex, a complex that mediates the translocation of transit peptide-containing proteins across the mitochondrial inner membrane. Links the inner and outer membranes. The protein is Mitochondrial import inner membrane translocase subunit TIM17-3 (TIM17-3) of Arabidopsis thaliana (Mouse-ear cress).